A 233-amino-acid polypeptide reads, in one-letter code: Small ribosomal subunit protein uS2c (233 aa).

It belongs to the universal ribosomal protein uS2 family.

The protein resides in the plastid. The protein localises to the chloroplast. In Staurastrum punctulatum (Green alga), this protein is Small ribosomal subunit protein uS2c (rps2).